We begin with the raw amino-acid sequence, 332 residues long: UPF0194 membrane protein YbhG (332 aa).

The N-terminal stretch at 1 to 16 (MMKKPVVIGLAVVVLA) is a signal peptide. Residues 107–209 (NEEIAQAAAA…LNLQDSTLIA (103 aa)) are a coiled coil.

Belongs to the UPF0194 family.

It localises to the periplasm. This is UPF0194 membrane protein YbhG from Escherichia coli (strain K12 / MC4100 / BW2952).